A 164-amino-acid chain; its full sequence is Nucleotide-binding protein Helmi_22490 (164 aa).

This sequence belongs to the YajQ family.

Nucleotide-binding protein. The chain is Nucleotide-binding protein Helmi_22490 from Heliobacterium modesticaldum (strain ATCC 51547 / Ice1).